A 595-amino-acid polypeptide reads, in one-letter code: GRB2-associated-binding protein 3 (595 aa).

One can recognise a PH domain in the interval 5–117 (DTVCMGWLIK…WVHSISQVCN (113 aa)). The interval 295-339 (SGVKELNIMSNTPPPRPPKPSYLSEQRQDQPLLTGHSSNKKPGYT) is disordered. Polar residues predominate over residues 317–331 (LSEQRQDQPLLTGHS). Serine 346 carries the phosphoserine modification. 2 disordered regions span residues 389 to 408 (PSAEDSYVPMSPKGTASELR) and 418 to 463 (PMSS…QEHT). The span at 454–463 (RNLSTIQEHT) shows a compositional bias: polar residues. Phosphoserine is present on serine 480. Residues 493–513 (STPSEEEEEEEEEEEEEEEEE) are disordered. Residues 496 to 513 (SEEEEEEEEEEEEEEEEE) are compositionally biased toward acidic residues.

It belongs to the GAB family. In terms of assembly, interacts with PIK3R/p85, SHP2 and GRAP2/MONA. May interact with Grb2. Post-translationally, phosphorylated on tyrosine residue(s) after macrophage colony-stimulating factor (M-CSF) receptor stimulation. As to expression, highly expressed in spleen and thymus and weakly in brain, heart, lung, kidney, uterus, and embryonic stem cells. Also expressed in myeloid and macrophage cell lines.

In Mus musculus (Mouse), this protein is GRB2-associated-binding protein 3 (Gab3).